Here is a 963-residue protein sequence, read N- to C-terminus: MSNAKSLEQLEQTQDFIRRHIGPSPAQVSDMLSALEVSSVEELIGQTVPAGIRLEQPLTVGESRTEVETLSYLKSVASKNKVFKSYIGQGYHPTHVPHVILRNVLENPGWYTAYTPYQPEIAQGRLESLLNFQTMTLDLTGLDLASASLLDESTAAAEAMGLAKRVSKAKKANAFFIADDVHTQTIDVVSTRAEQFGFEIIVGKAADAVNHEIFGALFQYPSTTGEVVDITDLIAGVQSKKAIACVAADIMSLLLLKAPGKLGADVVLGSAQRFGVPMGYGGPHAAFFATRDAYKRSLPGRIIGVSKDRLGNDALRMAMQTREQHIRRDKANSNICTAQVLLANMAAFYAVYHGPQGLKTIAQRIHRFADILAAGLQAKGVSLKHNTWFDTLTVVSDSKADVIARALASGVNFATNRDGEYSIALSETTTRADVAQLFDIVLGEGHGLSVDAIAADIENNGSTSIPASLERDDEVLTHPNFNSYHSETEMLRYIKRLENKDLALNHSMISLGSCTMKLNATAEMIPITWPEFSNLHPFCPLDQAQGYQIMMGELHDWLVNITGYDAVSLQPNSGAQGEYAGLIAIRKYHESRGDAHRNVCLIPSSAHGTNPASAQMASMKIVVVDCDKNGNVDMADLKAKAEAVAENLSCIMITYPSTHGVYEETIREICDVIHQHGGQVYMDGANMNAQVGVTSPGFIGSDVSHLNLHKTFCIPHGGGGPGVGPIGVKSHLAPFMPNHSIINVPGTNEGNGAVSAAPYGSASILPISWAYITMMGSEGLKQATEMAIVNANYLTHELSKHFPILYRGRNNRVAHECIVDLRPLKELSGITEMDVAKRLQDYGFHSPTMSFPVAGTLMIEPTESESKVEIDRFIEAMVSIKSEIDKVISGEWSIENNPLVFAPHTQGDVLGNEWDRAYDRFYAAFPVPSVAKNKFWPTVTRIDDVYGDRNLVCACPPVETYRD.

Residue lysine 710 is modified to N6-(pyridoxal phosphate)lysine.

The protein belongs to the GcvP family. The glycine cleavage system is composed of four proteins: P, T, L and H. It depends on pyridoxal 5'-phosphate as a cofactor.

It catalyses the reaction N(6)-[(R)-lipoyl]-L-lysyl-[glycine-cleavage complex H protein] + glycine + H(+) = N(6)-[(R)-S(8)-aminomethyldihydrolipoyl]-L-lysyl-[glycine-cleavage complex H protein] + CO2. Functionally, the glycine cleavage system catalyzes the degradation of glycine. The P protein binds the alpha-amino group of glycine through its pyridoxal phosphate cofactor; CO(2) is released and the remaining methylamine moiety is then transferred to the lipoamide cofactor of the H protein. The chain is Glycine dehydrogenase (decarboxylating) from Pseudoalteromonas translucida (strain TAC 125).